Here is a 368-residue protein sequence, read N- to C-terminus: Agmatine deiminase (368 aa).

Cysteine 357 (amidino-cysteine intermediate) is an active-site residue.

The protein belongs to the agmatine deiminase family. Homodimer.

It carries out the reaction agmatine + H2O = N-carbamoylputrescine + NH4(+). It participates in amine and polyamine biosynthesis; putrescine biosynthesis via agmatine pathway; N-carbamoylputrescine from agmatine: step 1/1. In terms of biological role, mediates the hydrolysis of agmatine into N-carbamoylputrescine in the arginine decarboxylase (ADC) pathway of putrescine biosynthesis, a basic polyamine. This chain is Agmatine deiminase, found in Pseudomonas fluorescens (strain ATCC BAA-477 / NRRL B-23932 / Pf-5).